The sequence spans 577 residues: BICD family-like cargo adapter 1 (577 aa).

The segment at 63 to 100 (LLAAGERSSEPGEHPQAEPESPVEGHGPPLPPPPTQDP) is disordered. Residues 69–79 (RSSEPGEHPQA) show a composition bias toward basic and acidic residues. The short motif at 116 to 120 (AARLG) is the CC1 box element. Positions 121-379 (KALLERNQDM…QLWEAYCQVR (259 aa)) form a coiled coil. A disordered region spans residues 389 to 415 (DSADSAVSTDSSMDESSETSSAKDVPA). A compositionally biased stretch (low complexity) spans 390 to 399 (SADSAVSTDS). Residues 443–528 (LSVEMTALKE…LEAWQDDMHR (86 aa)) adopt a coiled-coil conformation.

The protein belongs to the BICDR family. Part of a tripartite complex with dynein and dynactin, acts an adapter linking the dynein motor complex and dynactin. Interacts with KIF1C. Interacts with RAB6A and RAB6B; interaction is specific to Rab6. As to expression, highly expressed during early embryonic development. Predominantly expressed in kidney, undifferentiated neural tissue and developing eye.

Its subcellular location is the cytoplasm. The protein localises to the cytoskeleton. The protein resides in the microtubule organizing center. It is found in the centrosome. In terms of biological role, acts as an adapter protein linking the dynein motor complex to various cargos and converts dynein from a non-processive to a highly processive motor in the presence of dynactin. Facilitates the interaction between dynein and dynactin and activates dynein processivity (the ability to move along a microtubule for a long distance without falling off the track). Predominantly recruits 2 dyneins, which increases both the force and speed of the microtubule motor. Component of secretory vesicle machinery in developing neurons that acts as a regulator of neurite outgrowth. Regulates the secretory vesicle transport by controlling the accumulation of Rab6-containing secretory vesicles in the pericentrosomal region restricting anterograde secretory transport during the early phase of neuronal differentiation, thereby inhibiting neuritogenesis. This chain is BICD family-like cargo adapter 1 (Bicdl1), found in Mus musculus (Mouse).